We begin with the raw amino-acid sequence, 75 residues long: UPF0729 protein C18orf32 homolog (75 aa).

The tract at residues 1–37 (MVCIPCIVIPVLLWVYKRFLEPVLYPIISPIISRFWR) is necessary for its localzation to the endoplasmic reticulum and lipid droplets. Over residues 43–65 (DTPQQKTSTAECNGAANGSTANG) the composition is skewed to polar residues. Residues 43–75 (DTPQQKTSTAECNGAANGSTANGPKTVADKKAD) form a disordered region.

This sequence belongs to the UPF0729 family.

Its subcellular location is the endoplasmic reticulum. The protein localises to the lipid droplet. This chain is UPF0729 protein C18orf32 homolog, found in Danio rerio (Zebrafish).